Consider the following 476-residue polypeptide: MNSAVEAQLAELGIEGYLKQHQYKSLLRFLTCGSVDDGKSTLIGRLLHDSKQIYEDQLAAVHSDSQRVGTTGEKPDLALLVDGLQAEREQGITIDVAYRYFSTQKRKFIIADTPGHEQYTRNMATGASTCDLAVILVDARKGVLDQTRRHSFISNLLGLKHFVVAINKMDLVDYSQERFEEIRDEYLQFSENLAGETDIQIIPLSALEGDNVVEKGQNLSWFEGPSLLELLETVDVDHEKGEGDFRFPVQYVNRPNLDFRGFAGTISSGSVKVGDAIKALPSGKTSTVARIVTFDGDVQEAQAGLAVTLTLNDEIDISRGDLLVLENAQVESTNHLLADVVWMTEQPLQPGRDYDIKIAGKKTVGHVEAIRHQYDINNLSTHGAAELPLNGIGLCEWSLNESVALDNYQDCADTGGFIIIDRLTNVTVGAGMVKESLAAVERGLADVSAFELELNALVRKHFPHWEAKDLSQLLKK.

A tr-type G domain is found at 24–239; it reads KSLLRFLTCG…LLETVDVDHE (216 aa). The interval 33 to 40 is G1; that stretch reads GSVDDGKS. A GTP-binding site is contributed by 33–40; sequence GSVDDGKS. Residues 91–95 are G2; that stretch reads GITID. Positions 112–115 are G3; that stretch reads DTPG. GTP-binding positions include 112 to 116 and 167 to 170; these read DTPGH and NKMD. Residues 167–170 are G4; it reads NKMD. Residues 205–207 are G5; that stretch reads SAL.

It belongs to the TRAFAC class translation factor GTPase superfamily. Classic translation factor GTPase family. CysN/NodQ subfamily. As to quaternary structure, heterodimer composed of CysD, the smaller subunit, and CysN.

The enzyme catalyses sulfate + ATP + H(+) = adenosine 5'-phosphosulfate + diphosphate. Its pathway is sulfur metabolism; hydrogen sulfide biosynthesis; sulfite from sulfate: step 1/3. Its function is as follows. With CysD forms the ATP sulfurylase (ATPS) that catalyzes the adenylation of sulfate producing adenosine 5'-phosphosulfate (APS) and diphosphate, the first enzymatic step in sulfur assimilation pathway. APS synthesis involves the formation of a high-energy phosphoric-sulfuric acid anhydride bond driven by GTP hydrolysis by CysN coupled to ATP hydrolysis by CysD. This Vibrio campbellii (strain ATCC BAA-1116) protein is Sulfate adenylyltransferase subunit 1.